The sequence spans 284 residues: Pantothenate synthetase (284 aa).

An ATP-binding site is contributed by 30 to 37 (MGALHEGH). His-37 acts as the Proton donor in catalysis. Gln-61 serves as a coordination point for (R)-pantoate. Gln-61 provides a ligand contact to beta-alanine. Position 147–150 (147–150 (GEKD)) interacts with ATP. Gln-153 contacts (R)-pantoate. Residues Val-176 and 184-187 (TSSR) each bind ATP.

The protein belongs to the pantothenate synthetase family. In terms of assembly, homodimer.

The protein localises to the cytoplasm. The catalysed reaction is (R)-pantoate + beta-alanine + ATP = (R)-pantothenate + AMP + diphosphate + H(+). The protein operates within cofactor biosynthesis; (R)-pantothenate biosynthesis; (R)-pantothenate from (R)-pantoate and beta-alanine: step 1/1. Functionally, catalyzes the condensation of pantoate with beta-alanine in an ATP-dependent reaction via a pantoyl-adenylate intermediate. The polypeptide is Pantothenate synthetase (Chlorobaculum tepidum (strain ATCC 49652 / DSM 12025 / NBRC 103806 / TLS) (Chlorobium tepidum)).